The following is a 1098-amino-acid chain: Protein diaphanous homolog 2 (1098 aa).

M1 carries the N-acetylmethionine modification. The interval 1-62 (MEELGAAASG…SFRKSATKRE (62 aa)) is disordered. Basic and acidic residues predominate over residues 36–52 (ANEEETRNKPKLRDRIT). One can recognise a GBD/FH3 domain in the interval 90–463 (SLILSEKEVL…QIVLHCSGMD (374 aa)). Coiled-coil stretches lie at residues 375–416 (QLRV…NMLK) and 490–539 (EENE…GQGV). Disordered regions lie at residues 537 to 565 (QGVP…PPPP), 578 to 611 (PPPP…GVFP), 679 to 699 (MKGQ…PKKK), 1007 to 1047 (HKRK…NKEG), and 1063 to 1098 (GAAF…MSSK). 2 stretches are compositionally biased toward pro residues: residues 543-565 (IPGP…PPPP) and 578-608 (PPPP…PPGG). The FH1 domain maps to 544–620 (PGPPPPPPLP…PLLSGPIELP (77 aa)). One can recognise an FH2 domain in the interval 625-1025 (QKKLYKPDIP…SRRAKLAKEK (401 aa)). A coiled-coil region spans residues 999 to 1050 (FLEALKENHKRKEMEEKSRRAKLAKEKAEQEKLERQKKKKQLIDINKEGDET). Composition is skewed to basic and acidic residues over residues 1007–1032 (HKRK…EKLE) and 1075–1087 (RNPD…LERS). The DAD domain maps to 1048-1078 (DETGVMDNLLEALQSGAAFRDRRKRIPRNPD).

The protein belongs to the formin homology family. Diaphanous subfamily. In terms of assembly, interacts with MAPRE1 and APC.

Its function is as follows. May be involved in oogenesis. This is Protein diaphanous homolog 2 (Diaph2) from Mus musculus (Mouse).